Consider the following 236-residue polypeptide: Segregation and condensation protein A (236 aa).

It belongs to the ScpA family. In terms of assembly, component of a cohesin-like complex composed of ScpA, ScpB and the Smc homodimer, in which ScpA and ScpB bind to the head domain of Smc. The presence of the three proteins is required for the association of the complex with DNA.

Its subcellular location is the cytoplasm. Its function is as follows. Participates in chromosomal partition during cell division. May act via the formation of a condensin-like complex containing Smc and ScpB that pull DNA away from mid-cell into both cell halves. In Streptococcus sanguinis (strain SK36), this protein is Segregation and condensation protein A.